The primary structure comprises 565 residues: Polyadenylate-binding protein 1-A (565 aa).

RRM domains are found at residues 10–88 (SSLY…WSQR), 98–175 (GNVF…PFKS), 188–265 (TNVF…RAQK), and 284–362 (VNLY…LAQR). The disordered stretch occupies residues 435–466 (YARGQPRQNGPRQNGGQPRQNGPRPDVSGAQP). Residues 440–454 (PRQNGPRQNGGQPRQ) are compositionally biased toward polar residues. The PABC domain maps to 489 to 565 (SALNLQSIIN…REALEVLGSN (77 aa)).

Belongs to the polyadenylate-binding protein type-1 family.

It localises to the cytoplasm. It is found in the nucleus. In terms of biological role, binds the poly(A) tail of mRNA. Appears to be an important mediator of the multiple roles of the poly(A) tail in mRNA biogenesis, stability and translation. The sequence is that of Polyadenylate-binding protein 1-A (pabpc1A) from Dictyostelium discoideum (Social amoeba).